The chain runs to 69 residues: Protein translocase subunit SecE (69 aa).

Residues 43 to 63 traverse the membrane as a helical segment; sequence GLGICLLGFVGFVIHVPITYL.

The protein belongs to the SecE/SEC61-gamma family. Component of the Sec protein translocase complex. Heterotrimer consisting of SecY (alpha), SecG (beta) and SecE (gamma) subunits. The heterotrimers can form oligomers, although 1 heterotrimer is thought to be able to translocate proteins. Interacts with the ribosome. May interact with SecDF, and other proteins may be involved.

The protein resides in the cell membrane. Functionally, essential subunit of the Sec protein translocation channel SecYEG. Clamps together the 2 halves of SecY. May contact the channel plug during translocation. The chain is Protein translocase subunit SecE from Methanococcus maripaludis (strain DSM 14266 / JCM 13030 / NBRC 101832 / S2 / LL).